A 374-amino-acid polypeptide reads, in one-letter code: MSMADQLQIPADIKPRDGRFGCGPSKVRPEQLQALSTTAAPLFGTSHRQAPVKNLVGRLRSGLAELFSLPDGYQVILGNGGATAFWDAAAFGLIDKRSLHLSYGEFSSKFAAAVAKNPFVGDPVVIKSDAGSAPEPQSDPSVDLIAWAHNETSTGVAVPVRRPVDSGDALVAIDATSGAGGLPVDIGETDAYYFSPQKNFAGDGGLWLALMSPAALARVESIAASGRWVPDFLSLPIAVENSLKDQTYNTPAIGTLALMAEQVDWMLGNGGLDWAVKRTADSAGRLYSWAEERDYTTPFVADPKLRSQVVGTIDFVDDVDAAAVAKILRANGVVDTEPYRKLGRNQLRVGMFPAVDPDDVSALTQCVDWVVERL.

An L-glutamate-binding site is contributed by arginine 48. Residues 82-83, phenylalanine 106, threonine 152, aspartate 174, and glutamine 197 each bind pyridoxal 5'-phosphate; that span reads AT. Lysine 198 bears the N6-(pyridoxal phosphate)lysine mark. 249–250 is a binding site for pyridoxal 5'-phosphate; it reads NT.

Belongs to the class-V pyridoxal-phosphate-dependent aminotransferase family. SerC subfamily. In terms of assembly, homodimer. Pyridoxal 5'-phosphate is required as a cofactor.

The protein localises to the cytoplasm. The catalysed reaction is O-phospho-L-serine + 2-oxoglutarate = 3-phosphooxypyruvate + L-glutamate. It carries out the reaction 4-(phosphooxy)-L-threonine + 2-oxoglutarate = (R)-3-hydroxy-2-oxo-4-phosphooxybutanoate + L-glutamate. The protein operates within amino-acid biosynthesis; L-serine biosynthesis; L-serine from 3-phospho-D-glycerate: step 2/3. Its pathway is cofactor biosynthesis; pyridoxine 5'-phosphate biosynthesis; pyridoxine 5'-phosphate from D-erythrose 4-phosphate: step 3/5. In terms of biological role, catalyzes the reversible conversion of 3-phosphohydroxypyruvate to phosphoserine and of 3-hydroxy-2-oxo-4-phosphonooxybutanoate to phosphohydroxythreonine. This Mycolicibacterium paratuberculosis (strain ATCC BAA-968 / K-10) (Mycobacterium paratuberculosis) protein is Putative phosphoserine aminotransferase.